The sequence spans 196 residues: MGRGRSEIKRIENPTQRQSTFYKRRDGLFKKARELAVLCDADLLLLLFSASGKLYHFLSPTVPSVREFVERYEATTHTKVWADIRQERRAELEKVGSMCDLLEKQLRFMTVDDGEEYTVPSLEALEHNLEAAMRKVRSEKDRKIGGEICYLQNIIRGRQEERYGLCDKIAHAQTLKDVECGSTSLSNGLDLKLGFN.

An MADS-box domain is found at 1 to 61 (MGRGRSEIKR…GKLYHFLSPT (61 aa)). In terms of domain architecture, K-box spans 85–175 (RQERRAELEK…CDKIAHAQTL (91 aa)).

The protein localises to the nucleus. Functionally, probable transcription factor. The protein is MADS-box transcription factor 32 (MADS32) of Oryza sativa subsp. japonica (Rice).